The sequence spans 426 residues: Glutamate-1-semialdehyde 2,1-aminomutase (426 aa).

Position 265 is an N6-(pyridoxal phosphate)lysine (Lys-265).

This sequence belongs to the class-III pyridoxal-phosphate-dependent aminotransferase family. HemL subfamily. As to quaternary structure, homodimer. It depends on pyridoxal 5'-phosphate as a cofactor.

It localises to the cytoplasm. It catalyses the reaction (S)-4-amino-5-oxopentanoate = 5-aminolevulinate. The protein operates within porphyrin-containing compound metabolism; protoporphyrin-IX biosynthesis; 5-aminolevulinate from L-glutamyl-tRNA(Glu): step 2/2. The chain is Glutamate-1-semialdehyde 2,1-aminomutase from Enterobacter sp. (strain 638).